The sequence spans 499 residues: GTPase Der (499 aa).

Positions proline 3 to asparagine 166 constitute an EngA-type G 1 domain. Residues glycine 9–serine 16, aspartate 56–isoleucine 60, and asparagine 118–aspartate 121 each bind GTP. The tract at residues asparagine 166–serine 199 is disordered. The span at aspartate 168–valine 186 shows a compositional bias: acidic residues. Positions glutamine 190–serine 199 are enriched in basic and acidic residues. The region spanning isoleucine 204–isoleucine 377 is the EngA-type G 2 domain. GTP-binding positions include glycine 210–serine 217, aspartate 257–valine 261, and asparagine 322–aspartate 325. The 85-residue stretch at threonine 378 to aspartate 462 folds into the KH-like domain. A compositionally biased stretch (basic and acidic residues) spans lysine 459 to leucine 472. Residues lysine 459–arginine 499 form a disordered region. Residues asparagine 478–arginine 499 are compositionally biased toward basic residues.

It belongs to the TRAFAC class TrmE-Era-EngA-EngB-Septin-like GTPase superfamily. EngA (Der) GTPase family. As to quaternary structure, associates with the 50S ribosomal subunit.

Its function is as follows. GTPase that plays an essential role in the late steps of ribosome biogenesis. In Stutzerimonas stutzeri (strain A1501) (Pseudomonas stutzeri), this protein is GTPase Der.